We begin with the raw amino-acid sequence, 122 residues long: UPF0482 protein Spro_2288 (122 aa).

Positions 1–31 (MKTLSTQRLLRGMLPVAMLMLMGAWQAPALA) are cleaved as a signal peptide. The segment at 46–71 (SNSGAMSTEAARQSKQQFNDTKSLRN) is disordered.

This sequence belongs to the UPF0482 family.

This is UPF0482 protein Spro_2288 from Serratia proteamaculans (strain 568).